The chain runs to 408 residues: Putative gustatory receptor 98c (408 aa).

Topologically, residues 1–42 (MEMEAKRSRLLTTARPYLQVLSLFGLTPPAEFFTRTLRKRRR) are cytoplasmic. Residues 43-63 (FCWMAGYSLYLIAILLMVFYE) form a helical membrane-spanning segment. The Extracellular segment spans residues 64–92 (FHANIVSLHLEIYKFHVEDFSKVMGRTQK). Residues 93–113 (FLIVAIATCNQLNILLNYGRL) traverse the membrane as a helical segment. At 114-146 (GLIYDEIANLDLGIDKSSKNFCGKSHWWSFRLR) the chain is on the cytoplasmic side. Residues 147–167 (LTLSIGLWMVIIIGVIPRLTL) traverse the membrane as a helical segment. Residues 168–183 (GRAGPFFHWVNQVLTQ) lie on the Extracellular side of the membrane. Residues 184–204 (IILIMLQLKGPEYCLFVLLVY) form a helical membrane-spanning segment. Residues 205–261 (ELILRTRHVLEQLKDDLEDFDCGARIQELCVTLKQNQLLIGRIWRLVDEIGAYFRWS) are Cytoplasmic-facing. The chain crosses the membrane as a helical span at residues 262 to 282 (MTLLFLYNGLTILHVVNWAII). The Extracellular portion of the chain corresponds to 283–296 (RSIDPNDCCQLNRL). The helical transmembrane segment at 297 to 317 (GSITFLSFNLLLTCFFSECCV) threads the bilayer. Topologically, residues 318 to 367 (KTYNSISYILHQIGCLPTAEEFQMLKMGLKEYILQMQHLKLLFTCGGLFD) are cytoplasmic. A helical transmembrane segment spans residues 368–388 (INIKLFGGMLVTLCGYVIIIV). Over 389-408 (QFKIQDFALIGYRQNTSDTS) the chain is Extracellular. A glycan (N-linked (GlcNAc...) asparagine) is linked at Asn403.

Belongs to the insect chemoreceptor superfamily. Gustatory receptor (GR) family. Gr2a subfamily.

It localises to the cell membrane. Functionally, probable gustatory receptor which mediates acceptance or avoidance behavior, depending on its substrates. This Drosophila melanogaster (Fruit fly) protein is Putative gustatory receptor 98c (Gr98c).